Here is a 120-residue protein sequence, read N- to C-terminus: MSIMRSIMSNRLVRWSREYPELFITWCVMTYTFGVAGYMLGQRGLLVQHEDQVRIPSKNAHPWEDTKSSSGKSDESLDYSYKYYPRGDRSKEPRKAPSAIQYSTFPVKGVSEEVLERFSK.

A helical transmembrane segment spans residues 19–41 (YPELFITWCVMTYTFGVAGYMLG). Positions 57 to 78 (SKNAHPWEDTKSSSGKSDESLD) are disordered. The segment covering 61–75 (HPWEDTKSSSGKSDE) has biased composition (basic and acidic residues).

It localises to the membrane. This is an uncharacterized protein from Schizosaccharomyces pombe (strain 972 / ATCC 24843) (Fission yeast).